Here is a 189-residue protein sequence, read N- to C-terminus: Large ribosomal subunit protein bL17 (189 aa).

A disordered region spans residues 136 to 189 (KAAPAAEEEVVETEEAPAVEAEAAESEEAPAAEAEAAEAEAAETEEAPAAEDKK). Residues 141 to 189 (AEEEVVETEEAPAVEAEAAESEEAPAAEAEAAEAEAAETEEAPAAEDKK) are compositionally biased toward acidic residues.

This sequence belongs to the bacterial ribosomal protein bL17 family. As to quaternary structure, part of the 50S ribosomal subunit. Contacts protein L32.

This is Large ribosomal subunit protein bL17 from Paenarthrobacter aurescens (strain TC1).